Here is a 374-residue protein sequence, read N- to C-terminus: Growth/differentiation factor 8 (374 aa).

A signal peptide spans 1–22 (MHFTQVLISLSVLIACGPVGYG). Residues 23–265 (DITAHQQPST…ISEGPKRIRR (243 aa)) constitute a propeptide that is removed on maturation. N-linked (GlcNAc...) asparagine glycosylation is found at N72 and N274. 4 disulfides stabilise this stretch: C271–C281, C280–C339, C308–C371, and C312–C373.

Belongs to the TGF-beta family. Homodimer; disulfide-linked. As to expression, predominantly expressed in muscle. At hatching, expression is strongest in the skin epithelium, and is also found in the retina and brain. From day 28, expressed in skeletal muscle. In the adult, highest expression is seen in the gastrointestinal tract, brain, muscle, heart and testis. Also expressed in the adult pharynx, kidney, spleen, liver, gill, eyes, skin, swim bladder and ovary.

The protein localises to the secreted. Its function is as follows. Acts specifically as a negative regulator of skeletal muscle growth. May down-regulate muscle-specific transcription factors such as myod and myog. This Danio rerio (Zebrafish) protein is Growth/differentiation factor 8 (mstnb).